The primary structure comprises 124 residues: ATP synthase epsilon chain (124 aa).

The segment at 97 to 124 is disordered; the sequence is ARVREASSEEEKSRAESELRAVKRSKEK.

The protein belongs to the ATPase epsilon chain family. In terms of assembly, F-type ATPases have 2 components, CF(1) - the catalytic core - and CF(0) - the membrane proton channel. CF(1) has five subunits: alpha(3), beta(3), gamma(1), delta(1), epsilon(1). CF(0) has three main subunits: a, b and c.

The protein localises to the cell membrane. Its function is as follows. Produces ATP from ADP in the presence of a proton gradient across the membrane. This chain is ATP synthase epsilon chain, found in Corynebacterium urealyticum (strain ATCC 43042 / DSM 7109).